Reading from the N-terminus, the 624-residue chain is Polycystin-2-like protein 2 (624 aa).

Residues 1-31 (MAEASRWHRGGASKHKLHYRKEVEITTTLQE) lie on the Cytoplasmic side of the membrane. The chain crosses the membrane as a helical span at residues 32-52 (LLLYFIFLINLCILTFGMVNP). Topologically, residues 53-276 (HMYYLNKVMS…YSVKLLRYVS (224 aa)) are extracellular. N115 and N138 each carry an N-linked (GlcNAc...) asparagine glycan. A helical membrane pass occupies residues 277 to 297 (YYDYFIASCEITFCIFLFVFT). Over 298-314 (TQEVKKIKEFKSAYFKS) the chain is Cytoplasmic. The chain crosses the membrane as a helical span at residues 315 to 335 (IWNWLELLLLLLCFVAVSFNT). Residues 336-360 (YYNVQIFLLLGQLLKSTEKYSDFYF) lie on the Extracellular side of the membrane. Residues 361–381 (LACWHIYYNNIIAITIFFAWI) traverse the membrane as a helical segment. Residues 382 to 406 (KIFKFISFNKTMSQLSSTLSRCVKD) are Cytoplasmic-facing. A helical transmembrane segment spans residues 407-427 (IVGFAIMFFIIFFAYAQLGFL). The Extracellular portion of the chain corresponds to 428–469 (VFGSQVDDFSTFQNSIFAQFRIVLGDFNFAGIQQANPILGPI). The chain crosses the membrane as a helical span at residues 470–490 (YFITFIFFVFFVLLNMFLAII). Topologically, residues 491–624 (NDTYSEVKAD…NQVVRKVSAL (134 aa)) are cytoplasmic. Positions 556-576 (ENEIQNAEQMKKWKERLEKKY) form a coiled coil.

This sequence belongs to the polycystin family. As to quaternary structure, interacts with TRPC1 and TRPC5. As to expression, expressed only in testis. Expressed also in brain and kidney. Expressed only in transformed lymphoblasts.

The protein localises to the membrane. Its function is as follows. Exhibits a lower single conductance but no spontaneous channel activity. May function as a regulator of calcium channels or a channel component involving Ca2(+) homeostasis. The polypeptide is Polycystin-2-like protein 2 (Homo sapiens (Human)).